Here is a 103-residue protein sequence, read N- to C-terminus: Small ribosomal subunit protein uS10 (103 aa).

This sequence belongs to the universal ribosomal protein uS10 family. As to quaternary structure, part of the 30S ribosomal subunit.

Its function is as follows. Involved in the binding of tRNA to the ribosomes. This is Small ribosomal subunit protein uS10 from Alkalilimnicola ehrlichii (strain ATCC BAA-1101 / DSM 17681 / MLHE-1).